Here is a 657-residue protein sequence, read N- to C-terminus: L-glutamate oxidase precursor (657 aa).

A signal peptide spans 1-12 (MTETPRDNSATR). FAD contacts are provided by Glu-86, Ala-87, Arg-95, Met-120, Arg-121, Met-350, Glu-639, Trp-647, and Ile-648.

Belongs to the flavin monoamine oxidase family. LGOX subfamily. The mature enzyme is a heterohexamer composed of 2 alpha chains, 2 beta chains and 2 gamma chains (alpha2beta2gamma2). The cofactor is FAD. In terms of processing, the precursor form is proteolytically cleaved by an endopeptidase into alpha, beta and gamma chains, which form the stable mature enzyme.

Its subcellular location is the secreted. The enzyme catalyses L-glutamate + O2 + H2O = H2O2 + 2-oxoglutarate + NH4(+). Proteinase K-treated enzyme exhibits improved affinity for the substrate, increased activity and increased thermostability. Its function is as follows. Catalyzes the oxidative deamination of L-glutamate to 2-ketoglutarate along with the production of ammonia and hydrogen peroxide. Exhibits strict specificity for L-glutamate, and shows only very weak activity with L-glutamine. The protein is L-glutamate oxidase precursor of Streptomyces diastatochromogenes.